A 117-amino-acid chain; its full sequence is uncharacterized protein (117 aa).

It localises to the cytoplasm. The protein localises to the nucleus. This is an uncharacterized protein from Schizosaccharomyces pombe (strain 972 / ATCC 24843) (Fission yeast).